A 198-amino-acid polypeptide reads, in one-letter code: Peroxiredoxin-2 (198 aa).

Residue alanine 2 is modified to N-acetylalanine. The 159-residue stretch at 6–164 folds into the Thioredoxin domain; sequence AHIGKPAPDF…ALRLVQAFQY (159 aa). Cysteine 51 acts as the Cysteine sulfenic acid (-SOH) intermediate in catalysis. Phosphoserine is present on serine 112. At threonine 182 the chain carries Phosphothreonine. At lysine 196 the chain carries N6-acetyllysine.

The protein belongs to the peroxiredoxin family. AhpC/Prx1 subfamily. Homodimer; disulfide-linked, upon oxidation. 5 homodimers assemble to form a ring-like decamer. Interacts with TIPIN. In terms of processing, the enzyme can be inactivated by further oxidation of the cysteine sulfenic acid (C(P)-SOH) to sulphinic acid (C(P)-SO2H) instead of its condensation to a disulfide bond. It can be reactivated by forming a transient disulfide bond with sulfiredoxin SRXN1, which reduces the cysteine sulfinic acid in an ATP- and Mg-dependent manner. Post-translationally, acetylation increases resistance to transition to high molecular-mass complexes. Deacetylated by HDAC6 which decreases reducing activity.

Its subcellular location is the cytoplasm. The enzyme catalyses a hydroperoxide + [thioredoxin]-dithiol = an alcohol + [thioredoxin]-disulfide + H2O. Its function is as follows. Thiol-specific peroxidase that catalyzes the reduction of hydrogen peroxide and organic hydroperoxides to water and alcohols, respectively. Plays a role in cell protection against oxidative stress by detoxifying peroxides and as sensor of hydrogen peroxide-mediated signaling events. Might participate in the signaling cascades of growth factors and tumor necrosis factor-alpha by regulating the intracellular concentrations of H(2)O(2). The polypeptide is Peroxiredoxin-2 (PRDX2) (Cricetulus griseus (Chinese hamster)).